We begin with the raw amino-acid sequence, 377 residues long: Endoplasmic reticulum-Golgi intermediate compartment protein 2 (377 aa).

At 1 to 33 (MRRLNRKKTLSLVKELDAFPKVPESYVETSASG) the chain is on the cytoplasmic side. Residues 34 to 54 (GTVSLIAFTTMALLTIMEFSV) traverse the membrane as a helical segment. The Lumenal portion of the chain corresponds to 55 to 319 (YQDTWMKYEY…PFWQFFVRLC (265 aa)). A helical transmembrane segment spans residues 320–340 (GIVGGIFSTTGMLHGIGKFIV). At 341-377 (EIICCRFRLGSYKPVNSVPFEDGHTDNHLPLLENNTH) the chain is on the cytoplasmic side.

The protein belongs to the ERGIC family. In terms of assembly, may form a heteromeric complex composed of ERGIC1, ERGIC2 and ERGIC3. Interacts with ERGIC3, the interaction is required for the stable expression of both proteins. May interact with EEF1A1.

The protein localises to the endoplasmic reticulum-Golgi intermediate compartment membrane. It localises to the golgi apparatus. Its subcellular location is the cis-Golgi network membrane. The protein resides in the endoplasmic reticulum membrane. It is found in the cytoplasm. The protein localises to the nucleus. Its function is as follows. Possible role in transport between endoplasmic reticulum and Golgi. This Macaca fascicularis (Crab-eating macaque) protein is Endoplasmic reticulum-Golgi intermediate compartment protein 2 (ERGIC2).